The chain runs to 100 residues: Integration host factor subunit alpha (100 aa).

A disordered region spans residues 50–70 (GNFQLRDKPQRPGRNPKTGEE).

This sequence belongs to the bacterial histone-like protein family. Heterodimer of an alpha and a beta chain.

This protein is one of the two subunits of integration host factor, a specific DNA-binding protein that functions in genetic recombination as well as in transcriptional and translational control. The sequence is that of Integration host factor subunit alpha from Chromobacterium violaceum (strain ATCC 12472 / DSM 30191 / JCM 1249 / CCUG 213 / NBRC 12614 / NCIMB 9131 / NCTC 9757 / MK).